A 486-amino-acid chain; its full sequence is UDP-N-acetylmuramate--L-alanine ligase (486 aa).

126–132 (GTHGKTS) is a binding site for ATP.

It belongs to the MurCDEF family.

The protein localises to the cytoplasm. It carries out the reaction UDP-N-acetyl-alpha-D-muramate + L-alanine + ATP = UDP-N-acetyl-alpha-D-muramoyl-L-alanine + ADP + phosphate + H(+). The protein operates within cell wall biogenesis; peptidoglycan biosynthesis. Its function is as follows. Cell wall formation. This chain is UDP-N-acetylmuramate--L-alanine ligase, found in Buchnera aphidicola subsp. Baizongia pistaciae (strain Bp).